The chain runs to 55 residues: Accessory gland-specific peptide 70A (55 aa).

The signal sequence occupies residues 1 to 19; it reads MKTLSLFLVLVCLLGLVQS. Hydroxyproline is present on residues Pro-28, Pro-32, Pro-34, and Pro-38. Residues Cys-43 and Cys-55 are joined by a disulfide bond.

As to expression, main cells of the accessory glands of males (paragonial gland).

It is found in the secreted. Represses female sexual receptivity and stimulates oviposition. In Drosophila mauritiana (Fruit fly), this protein is Accessory gland-specific peptide 70A (Acp70A).